Consider the following 547-residue polypeptide: ATP synthase subunit alpha (547 aa).

173 to 180 (GDRQTGKT) is a binding site for ATP.

It belongs to the ATPase alpha/beta chains family. As to quaternary structure, F-type ATPases have 2 components, CF(1) - the catalytic core - and CF(0) - the membrane proton channel. CF(1) has five subunits: alpha(3), beta(3), gamma(1), delta(1), epsilon(1). CF(0) has three main subunits: a(1), b(2) and c(9-12). The alpha and beta chains form an alternating ring which encloses part of the gamma chain. CF(1) is attached to CF(0) by a central stalk formed by the gamma and epsilon chains, while a peripheral stalk is formed by the delta and b chains.

It localises to the cell membrane. It carries out the reaction ATP + H2O + 4 H(+)(in) = ADP + phosphate + 5 H(+)(out). In terms of biological role, produces ATP from ADP in the presence of a proton gradient across the membrane. The alpha chain is a regulatory subunit. This chain is ATP synthase subunit alpha, found in Thermobifida fusca (strain YX).